The primary structure comprises 201 residues: Small ribosomal subunit protein uS4c (201 aa).

The disordered stretch occupies residues 20–44 (GLTSKRPRAGSDLRNQSRSGKKSQY). An S4 RNA-binding domain is found at 89–152 (MRLDNTLFRL…NSRTLVQNLL (64 aa)).

This sequence belongs to the universal ribosomal protein uS4 family. As to quaternary structure, part of the 30S ribosomal subunit. Contacts protein S5. The interaction surface between S4 and S5 is involved in control of translational fidelity.

The protein localises to the plastid. It localises to the chloroplast. One of the primary rRNA binding proteins, it binds directly to 16S rRNA where it nucleates assembly of the body of the 30S subunit. Its function is as follows. With S5 and S12 plays an important role in translational accuracy. The protein is Small ribosomal subunit protein uS4c (rps4) of Aethionema grandiflorum (Persian stone-cress).